The sequence spans 936 residues: MutS protein homolog 4 (936 aa).

Disordered stretches follow at residues 1-83 (MLRP…AQGS) and 103-133 (GASS…SGYK). Residues 7–20 (SSTSPSAPAVSPSS) are compositionally biased toward low complexity. Polar residues predominate over residues 35–55 (LQETPQSRPSVQVVSASTCPG). Residue 680-687 (GPNMSGKS) participates in ATP binding.

The protein belongs to the DNA mismatch repair MutS family. As to quaternary structure, heterooligomer of MSH4 and MSH5. Highly expressed in testis. Also expressed in the ovary.

Its subcellular location is the chromosome. Its function is as follows. Involved in meiotic recombination. Required for reciprocal recombination and proper segregation of homologous chromosomes at meiosis. This chain is MutS protein homolog 4 (MSH4), found in Homo sapiens (Human).